Here is a 271-residue protein sequence, read N- to C-terminus: Chorismate dehydratase (271 aa).

The protein belongs to the MqnA/MqnD family. MqnA subfamily.

It catalyses the reaction chorismate = 3-[(1-carboxyvinyl)-oxy]benzoate + H2O. It functions in the pathway quinol/quinone metabolism; menaquinone biosynthesis. Its function is as follows. Catalyzes the dehydration of chorismate into 3-[(1-carboxyvinyl)oxy]benzoate, a step in the biosynthesis of menaquinone (MK, vitamin K2). This is Chorismate dehydratase from Thermus thermophilus (strain ATCC 27634 / DSM 579 / HB8).